We begin with the raw amino-acid sequence, 804 residues long: Probable replication endonuclease from prophage-like region 1 (804 aa).

Catalysis depends on O-(5'-phospho-DNA)-tyrosine intermediate residues tyrosine 498 and tyrosine 502.

It belongs to the phage GPA family.

In terms of biological role, possible endonuclease which induces a single-strand cut and initiates DNA replication. The protein is Probable replication endonuclease from prophage-like region 1 of Salmonella typhi.